The sequence spans 611 residues: Conglutin beta 1 (611 aa).

A signal peptide spans 1–30 (MAKMRVRLPMLILLLGVVFLLAASIGIAYG). Basic and acidic residues-rich tracts occupy residues 32–82 (KDFT…RSQS) and 130–141 (SRREEREEREQE). Disordered regions lie at residues 32–194 (KDFT…NRFQ) and 384–407 (LRKH…NLRS). Low complexity predominate over residues 142-151 (QGSSSGSQRG). Residues 152 to 181 (SGDERRQHRERRVHREEREQEQDSRSDSRR) show a composition bias toward basic and acidic residues. The Cupin type-1 1 domain occupies 186-344 (YHFSSNRFQT…TFNTRYEEIE (159 aa)). Low complexity predominate over residues 390-402 (SSSGEGKPSESGP). The Cupin type-1 2 domain maps to 403 to 569 (FNLRSNKPIY…TFPGSIEDVE (167 aa)). N434 is a glycosylation site (N-linked (GlcNAc...) asparagine). The interval 476–495 (DQQRQQDEQEEEYEQGEEEV) is disordered. The segment covering 483–492 (EQEEEYEQGE) has biased composition (acidic residues). A glycan (N-linked (GlcNAc...) asparagine) is linked at N519. A compositionally biased stretch (low complexity) spans 580–589 (FANAQPQQQQ). The interval 580–600 (FANAQPQQQQQREKEGRRGRR) is disordered.

It belongs to the 7S seed storage protein family. As to quaternary structure, component of globulins complexes which accumulate in seeds.

Functionally, seed storage protein. Accumulates during seed development and is hydrolyzed after germination to provide a carbon and nitrogen source for the developing seedling. In Lupinus angustifolius (Narrow-leaved blue lupine), this protein is Conglutin beta 1.